The chain runs to 193 residues: Mediator of RNA polymerase II transcription subunit 30 (193 aa).

The disordered stretch occupies residues 1-20 (MSTPPLAASGMAPGPFAGPQ). S2 is modified (N-acetylserine). A compositionally biased stretch (low complexity) spans 10-20 (GMAPGPFAGPQ). The stretch at 71-93 (YQDRLAKLQDHLRQLSILFRKLR) forms a coiled coil.

Belongs to the Mediator complex subunit 30 family. As to quaternary structure, component of the Mediator complex, which is composed of MED1, MED4, MED6, MED7, MED8, MED9, MED10, MED11, MED12, MED13, MED13L, MED14, MED15, MED16, MED17, MED18, MED19, MED20, MED21, MED22, MED23, MED24, MED25, MED26, MED27, MED29, MED30, MED31, CCNC, CDK8 and CDC2L6/CDK11. The MED12, MED13, CCNC and CDK8 subunits form a distinct module termed the CDK8 module. Mediator containing the CDK8 module is less active than Mediator lacking this module in supporting transcriptional activation. Individual preparations of the Mediator complex lacking one or more distinct subunits have been variously termed ARC, CRSP, DRIP, PC2, SMCC and TRAP.

Its subcellular location is the nucleus. Its function is as follows. Component of the Mediator complex, a coactivator involved in the regulated transcription of nearly all RNA polymerase II-dependent genes. Mediator functions as a bridge to convey information from gene-specific regulatory proteins to the basal RNA polymerase II transcription machinery. Mediator is recruited to promoters by direct interactions with regulatory proteins and serves as a scaffold for the assembly of a functional preinitiation complex with RNA polymerase II and the general transcription factors. In Bos taurus (Bovine), this protein is Mediator of RNA polymerase II transcription subunit 30 (MED30).